A 590-amino-acid chain; its full sequence is Protein ecdysoneless homolog (590 aa).

Positions 445–464 (EDFYGVKNSDTDTDSDSLAD) are disordered. Over residues 455-464 (TDTDSDSLAD) the composition is skewed to acidic residues.

This sequence belongs to the ECD family.

Its subcellular location is the cytoplasm. The protein localises to the nucleus. Its function is as follows. Involved in the regulation of carbohydrate metabolism. May act as a transcription factor. This Schizosaccharomyces pombe (strain 972 / ATCC 24843) (Fission yeast) protein is Protein ecdysoneless homolog.